A 251-amino-acid chain; its full sequence is Ditrans,polycis-undecaprenyl-diphosphate synthase ((2E,6E)-farnesyl-diphosphate specific) (251 aa).

Aspartate 29 is an active-site residue. Residue aspartate 29 participates in Mg(2+) binding. Residues glycine 30 to lysine 33, tryptophan 34, arginine 42, histidine 46, and serine 74 to aspartate 76 each bind substrate. Asparagine 77 serves as the catalytic Proton acceptor. Residues tryptophan 78, arginine 80, arginine 197, and arginine 203–serine 205 contribute to the substrate site. Glutamate 216 contacts Mg(2+).

Belongs to the UPP synthase family. Homodimer. Mg(2+) is required as a cofactor.

The catalysed reaction is 8 isopentenyl diphosphate + (2E,6E)-farnesyl diphosphate = di-trans,octa-cis-undecaprenyl diphosphate + 8 diphosphate. Functionally, catalyzes the sequential condensation of isopentenyl diphosphate (IPP) with (2E,6E)-farnesyl diphosphate (E,E-FPP) to yield (2Z,6Z,10Z,14Z,18Z,22Z,26Z,30Z,34E,38E)-undecaprenyl diphosphate (di-trans,octa-cis-UPP). UPP is the precursor of glycosyl carrier lipid in the biosynthesis of bacterial cell wall polysaccharide components such as peptidoglycan and lipopolysaccharide. The sequence is that of Ditrans,polycis-undecaprenyl-diphosphate synthase ((2E,6E)-farnesyl-diphosphate specific) from Buchnera aphidicola subsp. Baizongia pistaciae (strain Bp).